The sequence spans 182 residues: Ribosome-recycling factor (182 aa).

The protein belongs to the RRF family.

It localises to the cytoplasm. Its function is as follows. Responsible for the release of ribosomes from messenger RNA at the termination of protein biosynthesis. May increase the efficiency of translation by recycling ribosomes from one round of translation to another. The sequence is that of Ribosome-recycling factor from Thermosynechococcus vestitus (strain NIES-2133 / IAM M-273 / BP-1).